The primary structure comprises 419 residues: UDP-N-acetylglucosamine 1-carboxyvinyltransferase (419 aa).

22–23 (KN) lines the phosphoenolpyruvate pocket. Arg-95 contributes to the UDP-N-acetyl-alpha-D-glucosamine binding site. Catalysis depends on Cys-119, which acts as the Proton donor. At Cys-119 the chain carries 2-(S-cysteinyl)pyruvic acid O-phosphothioketal. Residues 164–167 (KVSV), Asp-308, and Ile-330 each bind UDP-N-acetyl-alpha-D-glucosamine.

This sequence belongs to the EPSP synthase family. MurA subfamily.

The protein localises to the cytoplasm. It carries out the reaction phosphoenolpyruvate + UDP-N-acetyl-alpha-D-glucosamine = UDP-N-acetyl-3-O-(1-carboxyvinyl)-alpha-D-glucosamine + phosphate. Its pathway is cell wall biogenesis; peptidoglycan biosynthesis. Its function is as follows. Cell wall formation. Adds enolpyruvyl to UDP-N-acetylglucosamine. In Rickettsia peacockii (strain Rustic), this protein is UDP-N-acetylglucosamine 1-carboxyvinyltransferase.